The chain runs to 1381 residues: DNA-directed RNA polymerase subunit beta'' (1381 aa).

Residues C224, C296, C303, and C306 each contribute to the Zn(2+) site.

Belongs to the RNA polymerase beta' chain family. RpoC2 subfamily. In terms of assembly, in plastids the minimal PEP RNA polymerase catalytic core is composed of four subunits: alpha, beta, beta', and beta''. When a (nuclear-encoded) sigma factor is associated with the core the holoenzyme is formed, which can initiate transcription. Zn(2+) serves as cofactor.

It is found in the plastid. It localises to the chloroplast. It catalyses the reaction RNA(n) + a ribonucleoside 5'-triphosphate = RNA(n+1) + diphosphate. Functionally, DNA-dependent RNA polymerase catalyzes the transcription of DNA into RNA using the four ribonucleoside triphosphates as substrates. The sequence is that of DNA-directed RNA polymerase subunit beta'' from Drimys granadensis.